We begin with the raw amino-acid sequence, 278 residues long: Adenylate kinase (278 aa).

50 to 55 (GAGKGT) provides a ligand contact to ATP. The interval 70–99 (ATGDMLRAQVAKGTALGKQAKKIMNEGGLV) is NMP. AMP-binding positions include Thr71, Arg76, 97-99 (GLV), 126-129 (GFPR), and Gln133. The segment at 167–204 (GRLVHPASGRSYHRIFNPPKDDMKDDITGEPLVQRSDD) is LID. ATP contacts are provided by residues Arg168 and 177 to 178 (SY). AMP contacts are provided by Arg201 and Arg212. Residue Gln240 coordinates ATP.

Belongs to the adenylate kinase family. AK2 subfamily. As to quaternary structure, monomer.

It localises to the cytoplasm. It is found in the cytosol. Its subcellular location is the mitochondrion intermembrane space. It carries out the reaction AMP + ATP = 2 ADP. In terms of biological role, catalyzes the reversible transfer of the terminal phosphate group between ATP and AMP. Plays an important role in cellular energy homeostasis and in adenine nucleotide metabolism. Adenylate kinase activity is critical for regulation of the phosphate utilization and the AMP de novo biosynthesis pathways. In Neurospora crassa (strain ATCC 24698 / 74-OR23-1A / CBS 708.71 / DSM 1257 / FGSC 987), this protein is Adenylate kinase (adk-1).